A 273-amino-acid chain; its full sequence is Tryptophan synthase alpha chain (273 aa).

Catalysis depends on proton acceptor residues Glu-49 and Asp-60.

It belongs to the TrpA family. In terms of assembly, tetramer of two alpha and two beta chains.

The catalysed reaction is (1S,2R)-1-C-(indol-3-yl)glycerol 3-phosphate + L-serine = D-glyceraldehyde 3-phosphate + L-tryptophan + H2O. It functions in the pathway amino-acid biosynthesis; L-tryptophan biosynthesis; L-tryptophan from chorismate: step 5/5. Functionally, the alpha subunit is responsible for the aldol cleavage of indoleglycerol phosphate to indole and glyceraldehyde 3-phosphate. The protein is Tryptophan synthase alpha chain of Thiobacillus denitrificans (strain ATCC 25259 / T1).